We begin with the raw amino-acid sequence, 187 residues long: Prepilin peptidase-dependent protein B (187 aa).

A propeptide spans 1-7 (MPVKEQG) (leader sequence). The residue at position 8 (F8) is an N-methylphenylalanine. The chain crosses the membrane as a helical span at residues 8–28 (FSLLEVLIAMAISSVLLLGAA).

It is found in the membrane. In terms of biological role, not yet known. The chain is Prepilin peptidase-dependent protein B (ppdB) from Escherichia coli (strain K12).